Here is a 104-residue protein sequence, read N- to C-terminus: Large ribosomal subunit protein bL21 (104 aa).

It belongs to the bacterial ribosomal protein bL21 family. Part of the 50S ribosomal subunit. Contacts protein L20.

In terms of biological role, this protein binds to 23S rRNA in the presence of protein L20. This chain is Large ribosomal subunit protein bL21, found in Gluconobacter oxydans (strain 621H) (Gluconobacter suboxydans).